We begin with the raw amino-acid sequence, 462 residues long: MFENLSDRLSKTLRNITGKGRLTEDNIKETLREVRMALLEADVALPVVREFIAKVKESALGEEVNKSLTPGQEFLKIVQRELEKAMGEANESLNLATQPPAVILMAGLQGAGKTTSVGKLAKFLRERHKKKVLVVSADVYRPAAIKQLETLAQSVGVDFFPSDVKQNPVDIAKSALADAKLKFYDVLIVDTAGRLHVDTEMMDEIKQVHAALNPIETLFTVDAMTGQDAANTAKAFNEALPLTGVILTKVDGDARGGAALSIRQITGKPIKFLGVGEKTEALEPFHPDRVASRILGMGDVLSLIEDLERSVDREKAEKMAQKFKKGDDFTLDDFREQLIEMKKMGGMMSMLEKLPGAKNLSEHVKNQVDDKMFVKMEAIINSMTLKERANPDIIKGSRRRRIALGSGTQVQDVNKLLKQFDEMQRMMKKMRKGGMAKMMRGMQGLMGGGLGGLGGLGGMFKR.

Residues 107-114, 190-194, and 248-251 each bind GTP; these read GLQGAGKT, DTAGR, and TKVD.

It belongs to the GTP-binding SRP family. SRP54 subfamily. In terms of assembly, part of the signal recognition particle protein translocation system, which is composed of SRP and FtsY. SRP is a ribonucleoprotein composed of Ffh and a 4.5S RNA molecule.

The protein localises to the cytoplasm. The enzyme catalyses GTP + H2O = GDP + phosphate + H(+). Its function is as follows. Involved in targeting and insertion of nascent membrane proteins into the cytoplasmic membrane. Binds to the hydrophobic signal sequence of the ribosome-nascent chain (RNC) as it emerges from the ribosomes. The SRP-RNC complex is then targeted to the cytoplasmic membrane where it interacts with the SRP receptor FtsY. Interaction with FtsY leads to the transfer of the RNC complex to the Sec translocase for insertion into the membrane, the hydrolysis of GTP by both Ffh and FtsY, and the dissociation of the SRP-FtsY complex into the individual components. The polypeptide is Signal recognition particle protein (Haemophilus influenzae (strain ATCC 51907 / DSM 11121 / KW20 / Rd)).